Here is a 127-residue protein sequence, read N- to C-terminus: Large ribosomal subunit protein uL24B (127 aa).

This sequence belongs to the universal ribosomal protein uL24 family. In terms of assembly, component of the large ribosomal subunit (LSU). Mature yeast ribosomes consist of a small (40S) and a large (60S) subunit. The 40S small subunit contains 1 molecule of ribosomal RNA (18S rRNA) and 33 different proteins (encoded by 57 genes). The large 60S subunit contains 3 rRNA molecules (25S, 5.8S and 5S rRNA) and 46 different proteins (encoded by 81 genes).

The protein resides in the cytoplasm. Functionally, component of the ribosome, a large ribonucleoprotein complex responsible for the synthesis of proteins in the cell. The small ribosomal subunit (SSU) binds messenger RNAs (mRNAs) and translates the encoded message by selecting cognate aminoacyl-transfer RNA (tRNA) molecules. The large subunit (LSU) contains the ribosomal catalytic site termed the peptidyl transferase center (PTC), which catalyzes the formation of peptide bonds, thereby polymerizing the amino acids delivered by tRNAs into a polypeptide chain. The nascent polypeptides leave the ribosome through a tunnel in the LSU and interact with protein factors that function in enzymatic processing, targeting, and the membrane insertion of nascent chains at the exit of the ribosomal tunnel. This is Large ribosomal subunit protein uL24B from Saccharomyces cerevisiae (strain ATCC 204508 / S288c) (Baker's yeast).